Here is a 1517-residue protein sequence, read N- to C-terminus: DNA-directed RNA polymerase subunit beta' (1517 aa).

Zn(2+) is bound by residues Cys71, Cys73, Cys86, and Cys89. 3 residues coordinate Mg(2+): Asp482, Asp484, and Asp486. Residues Cys812, Cys886, Cys893, and Cys896 each contribute to the Zn(2+) site.

The protein belongs to the RNA polymerase beta' chain family. As to quaternary structure, the RNAP catalytic core consists of 2 alpha, 1 beta, 1 beta' and 1 omega subunit. When a sigma factor is associated with the core the holoenzyme is formed, which can initiate transcription. Mg(2+) serves as cofactor. It depends on Zn(2+) as a cofactor.

The catalysed reaction is RNA(n) + a ribonucleoside 5'-triphosphate = RNA(n+1) + diphosphate. DNA-dependent RNA polymerase catalyzes the transcription of DNA into RNA using the four ribonucleoside triphosphates as substrates. This chain is DNA-directed RNA polymerase subunit beta', found in Campylobacter jejuni subsp. jejuni serotype O:2 (strain ATCC 700819 / NCTC 11168).